Here is a 351-residue protein sequence, read N- to C-terminus: Transcription factor Atoh1 (351 aa).

2 disordered regions span residues 16-39 and 89-116; these read LGDHHRHPQPHHVPPLTPQPPATL and EAAAPRDEADSQGELVRRSGCGGLSKSP. Residues 26-36 show a composition bias toward pro residues; that stretch reads HHVPPLTPQPP. The 53-residue stretch at 156-208 folds into the bHLH domain; it reads QRRLAANARERRRMHGLNHAFDQLRNVIPSFNNDKKLSKYETLQMAQIYINAL. Disordered stretches follow at residues 244–278 and 308–351; these read GAGASAVAGAQPAPGGGPRPTPPGPCRTRFSGPAS and LSPS…DEAS. A compositionally biased stretch (low complexity) spans 247–256; the sequence is ASAVAGAQPA. A compositionally biased stretch (pro residues) spans 258-268; that stretch reads GGGPRPTPPGP. Over residues 332–351 the composition is skewed to basic and acidic residues; it reads HRSDGEFSPHSHYSDSDEAS.

Efficient DNA binding requires dimerization with another bHLH protein. In terms of tissue distribution, developing nervous system, and in adult epithelial cells of the gastrointestinal tract.

It is found in the nucleus. Its function is as follows. Transcriptional regulator. Activates E box-dependent transcription in collaboration with TCF3/E47, but the activity is completely antagonized by the negative regulator of neurogenesis HES1. Plays a role in the differentiation of subsets of neural cells by activating E box-dependent transcription. This Mus musculus (Mouse) protein is Transcription factor Atoh1.